The chain runs to 481 residues: Cysteine--tRNA ligase (481 aa).

Cys-29 contacts Zn(2+). The 'HIGH' region motif lies at 31–41 (PTVYDYSHLGH). Cys-210, His-235, and Glu-239 together coordinate Zn(2+). Residues 272–276 (KMSKS) carry the 'KMSKS' region motif. Residue Lys-275 coordinates ATP.

This sequence belongs to the class-I aminoacyl-tRNA synthetase family. Monomer. The cofactor is Zn(2+).

It is found in the cytoplasm. The enzyme catalyses tRNA(Cys) + L-cysteine + ATP = L-cysteinyl-tRNA(Cys) + AMP + diphosphate. This is Cysteine--tRNA ligase from Anaeromyxobacter dehalogenans (strain 2CP-1 / ATCC BAA-258).